Here is a 288-residue protein sequence, read N- to C-terminus: Bifunctional protein FolD (288 aa).

NADP(+)-binding positions include 166–168 (GAS) and Ile232.

Belongs to the tetrahydrofolate dehydrogenase/cyclohydrolase family. In terms of assembly, homodimer.

It catalyses the reaction (6R)-5,10-methylene-5,6,7,8-tetrahydrofolate + NADP(+) = (6R)-5,10-methenyltetrahydrofolate + NADPH. It carries out the reaction (6R)-5,10-methenyltetrahydrofolate + H2O = (6R)-10-formyltetrahydrofolate + H(+). Its pathway is one-carbon metabolism; tetrahydrofolate interconversion. In terms of biological role, catalyzes the oxidation of 5,10-methylenetetrahydrofolate to 5,10-methenyltetrahydrofolate and then the hydrolysis of 5,10-methenyltetrahydrofolate to 10-formyltetrahydrofolate. This is Bifunctional protein FolD from Escherichia coli (strain UTI89 / UPEC).